We begin with the raw amino-acid sequence, 157 residues long: MIVLGIDPALGKLGWAVVAKESTKLHYLASGTIKTHSKDEIHNRLAFINSILEKVILEYQPNIAAIEETFVNTNNVTSLKLGYARGAIMSLIGRYNLDMQEFKPNTVKKTVTGYGHAGKEQILYMIKHLISGTDLITNSDEADAVALAYTCLVAKKY.

Catalysis depends on residues Asp-7, Glu-67, and Asp-140. 3 residues coordinate Mg(2+): Asp-7, Glu-67, and Asp-140.

The protein belongs to the RuvC family. Homodimer which binds Holliday junction (HJ) DNA. The HJ becomes 2-fold symmetrical on binding to RuvC with unstacked arms; it has a different conformation from HJ DNA in complex with RuvA. In the full resolvosome a probable DNA-RuvA(4)-RuvB(12)-RuvC(2) complex forms which resolves the HJ. The cofactor is Mg(2+).

The protein resides in the cytoplasm. It catalyses the reaction Endonucleolytic cleavage at a junction such as a reciprocal single-stranded crossover between two homologous DNA duplexes (Holliday junction).. Its function is as follows. The RuvA-RuvB-RuvC complex processes Holliday junction (HJ) DNA during genetic recombination and DNA repair. Endonuclease that resolves HJ intermediates. Cleaves cruciform DNA by making single-stranded nicks across the HJ at symmetrical positions within the homologous arms, yielding a 5'-phosphate and a 3'-hydroxyl group; requires a central core of homology in the junction. The consensus cleavage sequence is 5'-(A/T)TT(C/G)-3'. Cleavage occurs on the 3'-side of the TT dinucleotide at the point of strand exchange. HJ branch migration catalyzed by RuvA-RuvB allows RuvC to scan DNA until it finds its consensus sequence, where it cleaves and resolves the cruciform DNA. The sequence is that of Crossover junction endodeoxyribonuclease RuvC from Rickettsia prowazekii (strain Madrid E).